A 607-amino-acid polypeptide reads, in one-letter code: Polyphenol oxidase, chloroplastic (607 aa).

Residues 1-103 constitute a chloroplast transit peptide; it reads MASLPWSLTT…LGATKPLAFG (103 aa). The tract at residues 39–73 is disordered; sequence RNRSRRFAPSKVSCNSANGDPNSDSTSDVRETSSG. The segment covering 50-64 has biased composition (polar residues); it reads VSCNSANGDPNSDST. 2 cysteine pairs are disulfide-bonded: C114–C129 and C128–C191. The Cu cation site is built by H190, H211, H220, H342, H346, and H375. Residues 194-211 constitute a cross-link (2'-(S-cysteinyl)-histidine (Cys-His)); the sequence is CQGAYDQVGYTDLELQVH.

It belongs to the tyrosinase family. The cofactor is Cu(2+).

It is found in the plastid. The protein localises to the chloroplast thylakoid lumen. The enzyme catalyses 2 catechol + O2 = 2 1,2-benzoquinone + 2 H2O. Functionally, catalyzes the oxidation of mono- and o-diphenols to o-diquinones. The sequence is that of Polyphenol oxidase, chloroplastic from Vitis vinifera (Grape).